The following is a 1500-amino-acid chain: Alpha-1-macroglobulin (1500 aa).

A signal peptide spans 1–24 (MRRNQLPIPVFLLLLLLLPRDATA). C48 and C86 form a disulfide bridge. 3 N-linked (GlcNAc...) asparagine glycosylation sites follow: N55, N61, and N157. 2 disulfide bridges follow: C249/C298 and C267/C286. N-linked (GlcNAc...) asparagine glycans are attached at residues N382 and N412. Residues C469 and C562 are joined by a disulfide bond. N-linked (GlcNAc...) asparagine glycosylation is present at N568. 6 disulfide bridges follow: C594–C785, C642–C689, C835–C863, C861–C897, C935–C1344, and C1094–C1142. The segment at 686–746 (PRYCPMYQAY…QEVEVRETVR (61 aa)) is bait region. N-linked (GlcNAc...) asparagine glycans are attached at residues N883 and N944. Positions 986–989 (CGEQ) form a cross-link, isoglutamyl cysteine thioester (Cys-Gln). N1005 carries N-linked (GlcNAc...) asparagine glycosylation. A receptor-binding domain region spans residues 1360-1500 (EGEAPFTLKV…FSSDSEQGNA (141 aa)). Residues N1390 and N1448 are each glycosylated (N-linked (GlcNAc...) asparagine).

It belongs to the protease inhibitor I39 (alpha-2-macroglobulin) family. As to quaternary structure, homotetramer; disulfide-linked. In terms of tissue distribution, widely expressed. Highest level in ovary, testis, uterus and prostate. Protein found in plasma.

Its subcellular location is the secreted. Functionally, is able to inhibit all four classes of proteinases by a unique 'trapping' mechanism. This protein has a peptide stretch, called the 'bait region' which contains specific cleavage sites for different proteinases. When a proteinase cleaves the bait region, a conformational change is induced in the protein which traps the proteinase. The entrapped enzyme remains active against low molecular weight substrates (activity against high molecular weight substrates is greatly reduced). Following cleavage in the bait region a thioester bond is hydrolyzed and mediates the covalent binding of the protein to the proteinase. In Rattus norvegicus (Rat), this protein is Alpha-1-macroglobulin.